The following is a 130-amino-acid chain: Neelaredoxin (130 aa).

Fe cation is bound by residues Glu-15, His-17, His-45, His-51, Cys-115, and His-118.

This sequence belongs to the desulfoferrodoxin family. Monomer. It depends on Fe cation as a cofactor.

The catalysed reaction is 2 superoxide + 2 H(+) = H2O2 + O2. Its function is as follows. Non-heme iron protein. The sequence is that of Neelaredoxin (nlr) from Megalodesulfovibrio gigas (Desulfovibrio gigas).